The chain runs to 292 residues: uncharacterized protein (292 aa).

The chain crosses the membrane as a helical span at residues 13–35 (LFILFIIVVCIYLLPRVAINAFY).

The protein belongs to the serine esterase family.

The protein resides in the membrane. This is an uncharacterized protein from Salmonella typhimurium (strain LT2 / SGSC1412 / ATCC 700720).